The primary structure comprises 163 residues: Crossover junction endodeoxyribonuclease RuvC (163 aa).

Residues Asp9, Glu76, and Asp148 contribute to the active site. Residues Asp9, Glu76, and Asp148 each contribute to the Mg(2+) site.

This sequence belongs to the RuvC family. In terms of assembly, homodimer which binds Holliday junction (HJ) DNA. The HJ becomes 2-fold symmetrical on binding to RuvC with unstacked arms; it has a different conformation from HJ DNA in complex with RuvA. In the full resolvosome a probable DNA-RuvA(4)-RuvB(12)-RuvC(2) complex forms which resolves the HJ. Mg(2+) is required as a cofactor.

It localises to the cytoplasm. It carries out the reaction Endonucleolytic cleavage at a junction such as a reciprocal single-stranded crossover between two homologous DNA duplexes (Holliday junction).. The RuvA-RuvB-RuvC complex processes Holliday junction (HJ) DNA during genetic recombination and DNA repair. Endonuclease that resolves HJ intermediates. Cleaves cruciform DNA by making single-stranded nicks across the HJ at symmetrical positions within the homologous arms, yielding a 5'-phosphate and a 3'-hydroxyl group; requires a central core of homology in the junction. The consensus cleavage sequence is 5'-(A/T)TT(C/G)-3'. Cleavage occurs on the 3'-side of the TT dinucleotide at the point of strand exchange. HJ branch migration catalyzed by RuvA-RuvB allows RuvC to scan DNA until it finds its consensus sequence, where it cleaves and resolves the cruciform DNA. This chain is Crossover junction endodeoxyribonuclease RuvC, found in Trichormus variabilis (strain ATCC 29413 / PCC 7937) (Anabaena variabilis).